The sequence spans 147 residues: uncharacterized protein (147 aa).

In terms of domain architecture, HTH marR-type spans M1–K137. The H-T-H motif DNA-binding region spans Q53–K76.

This is an uncharacterized protein from Bacillus anthracis.